The chain runs to 142 residues: Endoribonuclease YbeY (142 aa).

Residues His100, His104, and His110 each coordinate Zn(2+).

Belongs to the endoribonuclease YbeY family. Requires Zn(2+) as cofactor.

It localises to the cytoplasm. Its function is as follows. Single strand-specific metallo-endoribonuclease involved in late-stage 70S ribosome quality control and in maturation of the 3' terminus of the 16S rRNA. This is Endoribonuclease YbeY from Helicobacter pylori (strain G27).